The primary structure comprises 912 residues: Protein translocase subunit SecA (912 aa).

Residues glutamine 87, 105–109, and aspartate 509 each bind ATP; that span reads GEGKT. Basic and acidic residues predominate over residues 847–859; it reads RERAVSQPVHEDA. The segment at 847 to 912 is disordered; sequence RERAVSQPVH…KYKHCHGKLN (66 aa). The span at 867–878 shows a compositional bias: acidic residues; the sequence is AESEEASGESAD. Positions 881-892 are enriched in basic and acidic residues; that stretch reads QPVRRDGPKVGR. Zn(2+) contacts are provided by cysteine 896, cysteine 898, cysteine 907, and histidine 908. Over residues 902-912 the composition is skewed to basic residues; sequence KKYKHCHGKLN.

The protein belongs to the SecA family. In terms of assembly, monomer and homodimer. Part of the essential Sec protein translocation apparatus which comprises SecA, SecYEG and auxiliary proteins SecDF-YajC and YidC. The cofactor is Zn(2+).

It localises to the cell inner membrane. The protein localises to the cytoplasm. The catalysed reaction is ATP + H2O + cellular proteinSide 1 = ADP + phosphate + cellular proteinSide 2.. Part of the Sec protein translocase complex. Interacts with the SecYEG preprotein conducting channel. Has a central role in coupling the hydrolysis of ATP to the transfer of proteins into and across the cell membrane, serving both as a receptor for the preprotein-SecB complex and as an ATP-driven molecular motor driving the stepwise translocation of polypeptide chains across the membrane. The chain is Protein translocase subunit SecA from Chromohalobacter salexigens (strain ATCC BAA-138 / DSM 3043 / CIP 106854 / NCIMB 13768 / 1H11).